The chain runs to 200 residues: Imidazole glycerol phosphate synthase subunit HisH (200 aa).

Residues 3-200 (DVALIDAGGA…LRNFLEMSFP (198 aa)) enclose the Glutamine amidotransferase type-1 domain. Residue C78 is the Nucleophile of the active site. Catalysis depends on residues H179 and E181.

In terms of assembly, heterodimer of HisH and HisF.

The protein resides in the cytoplasm. The catalysed reaction is 5-[(5-phospho-1-deoxy-D-ribulos-1-ylimino)methylamino]-1-(5-phospho-beta-D-ribosyl)imidazole-4-carboxamide + L-glutamine = D-erythro-1-(imidazol-4-yl)glycerol 3-phosphate + 5-amino-1-(5-phospho-beta-D-ribosyl)imidazole-4-carboxamide + L-glutamate + H(+). The enzyme catalyses L-glutamine + H2O = L-glutamate + NH4(+). Its pathway is amino-acid biosynthesis; L-histidine biosynthesis; L-histidine from 5-phospho-alpha-D-ribose 1-diphosphate: step 5/9. IGPS catalyzes the conversion of PRFAR and glutamine to IGP, AICAR and glutamate. The HisH subunit catalyzes the hydrolysis of glutamine to glutamate and ammonia as part of the synthesis of IGP and AICAR. The resulting ammonia molecule is channeled to the active site of HisF. The protein is Imidazole glycerol phosphate synthase subunit HisH of Xanthomonas axonopodis pv. citri (strain 306).